Consider the following 201-residue polypeptide: Twist-related protein 1 (201 aa).

Residues 1–18 (MMQDVSSSPVSPADDSLS) are compositionally biased toward low complexity. The tract at residues 1 to 106 (MMQDVSSSPV…GGGSPQSYEE (106 aa)) is disordered. The segment covering 34 to 43 (RGGRKRRSSR) has biased composition (basic residues). 2 stretches are compositionally biased toward gly residues: residues 46 to 65 (AGGGAGPGGAAGGGVGGGDE) and 80 to 100 (GCGGGGGGGAGGGGSSSGGGS). One can recognise a bHLH domain in the interval 109-160 (TQRVMANVRERQRTQSLNEAFAALPKIIPTLPSDKLSKIQTLKLAARYIDFL). The interval 162 to 190 (QVLQSDELDSKMASYVAHERLSYAFSVWR) is sufficient for transactivation activity.

In terms of assembly, efficient DNA binding requires dimerization with another bHLH protein. Homodimer or heterodimer with E proteins such as TCF3. ID1 binds preferentially to TCF3 but does not interact efficiently with TWIST1 so ID1 levels control the amount of TCF3 available to dimerize with TWIST and thus determine the type of dimer formed.

The protein resides in the nucleus. Acts as a transcriptional regulator. Inhibits myogenesis by sequestrating E proteins, inhibiting trans-activation by MEF2, and inhibiting DNA-binding by MYOD1 through physical interaction. This interaction probably involves the basic domains of both proteins. Also represses expression of pro-inflammatory cytokines such as TNFA and IL1B. Regulates cranial suture patterning and fusion. Activates transcription as a heterodimer with E proteins. Regulates gene expression differentially, depending on dimer composition. Homodimers induce expression of FGFR2 and POSTN while heterodimers repress FGFR2 and POSTN expression and induce THBS1 expression. Heterodimerization is also required for osteoblast differentiation. Represses the activity of the circadian transcriptional activator: NPAS2-BMAL1 heterodimer. The polypeptide is Twist-related protein 1 (TWIST1) (Pan troglodytes (Chimpanzee)).